The chain runs to 123 residues: Large ribosomal subunit protein uL14 (123 aa).

Belongs to the universal ribosomal protein uL14 family. In terms of assembly, part of the 50S ribosomal subunit. Forms a cluster with proteins L3 and L19. In the 70S ribosome, L14 and L19 interact and together make contacts with the 16S rRNA in bridges B5 and B8.

Its function is as follows. Binds to 23S rRNA. Forms part of two intersubunit bridges in the 70S ribosome. This chain is Large ribosomal subunit protein uL14, found in Escherichia coli O139:H28 (strain E24377A / ETEC).